Reading from the N-terminus, the 464-residue chain is Serine--tRNA synthetase-like protein Slimp (464 aa).

Belongs to the class-II aminoacyl-tRNA synthetase family. Type-1 seryl-tRNA synthetase subfamily.

It localises to the mitochondrion. Functionally, essential protein which may play a role in mitochondrial morphogenesis and function. Has transfer RNA (tRNA)-binding activity and can bind tRNA(Ser) but does not have serine--tRNA ligase activity and does not bind ATP. This is Serine--tRNA synthetase-like protein Slimp from Drosophila melanogaster (Fruit fly).